Consider the following 92-residue polypeptide: RIIa domain-containing protein 1 (92 aa).

The RIIa domain maps to 43–77 (KEVELLISGFFREMFLKRPDNIPEFAADYFTDPRL).

This Bos taurus (Bovine) protein is RIIa domain-containing protein 1 (RIIAD1).